Consider the following 142-residue polypeptide: FAD synthase (142 aa).

Residues 9–10 (TF), 14–17 (HPGH), and D92 contribute to the ATP site.

Belongs to the archaeal FAD synthase family. Homodimer. A divalent metal cation is required as a cofactor.

The catalysed reaction is FMN + ATP + H(+) = FAD + diphosphate. Its pathway is cofactor biosynthesis; FAD biosynthesis; FAD from FMN: step 1/1. Its function is as follows. Catalyzes the transfer of the AMP portion of ATP to flavin mononucleotide (FMN) to produce flavin adenine dinucleotide (FAD) coenzyme. The protein is FAD synthase of Haloferax volcanii (strain ATCC 29605 / DSM 3757 / JCM 8879 / NBRC 14742 / NCIMB 2012 / VKM B-1768 / DS2) (Halobacterium volcanii).